We begin with the raw amino-acid sequence, 261 residues long: CD40 ligand (261 aa).

Over 1–22 (MIETYNQTSPRSAATGLPISMK) the chain is Cytoplasmic. A helical; Signal-anchor for type II membrane protein transmembrane segment spans residues 23-46 (IFMYLLTVFLITQMIGSALFAVYL). Topologically, residues 47–261 (HRRLDKIEDE…GFTSFGLLKL (215 aa)) are extracellular. In terms of domain architecture, THD spans 122 to 261 (IAAHVISEAS…GFTSFGLLKL (140 aa)). A disulfide bridge links Cys-178 with Cys-218. Asn-240 carries an N-linked (GlcNAc...) (complex) asparagine; alternate glycan. N-linked (GlcNAc...) (high mannose) asparagine; alternate glycosylation is present at Asn-240.

This sequence belongs to the tumor necrosis factor family. Homotrimer. Interacts with isoform 3 of CD28. CD40 ligand, soluble form: Exists as either a monomer or a homotrimer. Forms a ternary complex between CD40 and integrins for CD40-CD40LG signaling. The soluble form derives from the membrane form by proteolytic processing. Post-translationally, N-linked glycan is a mixture of high mannose and complex type. Glycan structure does not influence binding affinity to CD40. In terms of processing, not O-glycosylated. In terms of tissue distribution, specifically expressed on activated CD4+ T-lymphocytes.

The protein resides in the cell membrane. Its subcellular location is the cell surface. It localises to the secreted. In terms of biological role, cytokine that acts as a ligand to CD40/TNFRSF5. Costimulates T-cell proliferation and cytokine production. Its cross-linking on T-cells generates a costimulatory signal which enhances the production of IL4 and IL10 in conjunction with the TCR/CD3 ligation and CD28 costimulation. Induces the activation of NF-kappa-B. Induces the activation of kinases MAPK8 and PAK2 in T-cells. Induces tyrosine phosphorylation of isoform 3 of CD28. Mediates B-cell proliferation in the absence of co-stimulus as well as IgE production in the presence of IL4. Involved in immunoglobulin class switching. Acts as a ligand for integrins, specifically ITGA5:ITGB1 and ITGAV:ITGB3; both integrins and the CD40 receptor are required for activation of CD40-CD40LG signaling, which have cell-type dependent effects, such as B-cell activation, NF-kappa-B signaling and anti-apoptotic signaling. This Homo sapiens (Human) protein is CD40 ligand (CD40LG).